The chain runs to 602 residues: Wings apart-like protein homolog 1 (602 aa).

The tract at residues 34–66 (NKQKRSPGQTVSKRLHKKQRVVSNPDLSLPSSP) is disordered. Residues 54–66 (VVSNPDLSLPSSP) are compositionally biased toward polar residues. Residues 160 to 492 (IQMKSIHELR…LGLVEESHEF (333 aa)) form the WAPL domain.

Belongs to the WAPL family.

It is found in the nucleus. The protein resides in the chromosome. In terms of biological role, regulator of sister chromatid cohesion in mitosis which negatively regulates cohesin association with chromatin. This Schizosaccharomyces pombe (strain 972 / ATCC 24843) (Fission yeast) protein is Wings apart-like protein homolog 1 (wpl1).